Here is a 284-residue protein sequence, read N- to C-terminus: Efem/EfeO family lipoprotein (284 aa).

The first 17 residues, 1-17, serve as a signal peptide directing secretion; that stretch reads MKKLTTLLLASTLLIAA. A lipid anchor (N-palmitoyl cysteine) is attached at cysteine 18. Cysteine 18 carries S-diacylglycerol cysteine lipidation.

The protein belongs to the EfeM/EfeO family.

It localises to the cell membrane. The sequence is that of Efem/EfeO family lipoprotein from Staphylococcus aureus (strain MRSA252).